The sequence spans 395 residues: Phosphoglycerate kinase (395 aa).

Substrate-binding positions include 22 to 24 (DFN), arginine 38, 61 to 64 (HLGR), arginine 119, and arginine 152. ATP contacts are provided by residues lysine 203, glycine 294, glutamate 325, and 351–354 (GGDT).

The protein belongs to the phosphoglycerate kinase family. Monomer.

Its subcellular location is the cytoplasm. The enzyme catalyses (2R)-3-phosphoglycerate + ATP = (2R)-3-phospho-glyceroyl phosphate + ADP. Its pathway is carbohydrate degradation; glycolysis; pyruvate from D-glyceraldehyde 3-phosphate: step 2/5. This chain is Phosphoglycerate kinase, found in Hydrogenobaculum sp. (strain Y04AAS1).